The sequence spans 450 residues: Glucose-6-phosphate isomerase (450 aa).

Thr39 bears the Phosphothreonine mark. Glu291 (proton donor) is an active-site residue. Residues His312 and Lys426 contribute to the active site.

This sequence belongs to the GPI family.

The protein resides in the cytoplasm. The catalysed reaction is alpha-D-glucose 6-phosphate = beta-D-fructose 6-phosphate. It functions in the pathway carbohydrate biosynthesis; gluconeogenesis. The protein operates within carbohydrate degradation; glycolysis; D-glyceraldehyde 3-phosphate and glycerone phosphate from D-glucose: step 2/4. In terms of biological role, catalyzes the reversible isomerization of glucose-6-phosphate to fructose-6-phosphate. The polypeptide is Glucose-6-phosphate isomerase (Bacillus cereus (strain AH187)).